The following is a 135-amino-acid chain: Small ribosomal subunit protein uS9 (135 aa).

Basic and acidic residues predominate over residues P102–A115. Positions P102 to R135 are disordered. Residues K116–R135 show a composition bias toward basic residues.

It belongs to the universal ribosomal protein uS9 family.

This Synechococcus sp. (strain CC9311) protein is Small ribosomal subunit protein uS9.